The following is an 817-amino-acid chain: General transcription factor 3C polypeptide 4 (817 aa).

M1 carries the post-translational modification N-acetylmethionine. The disordered stretch occupies residues 1–40 (MSEADQALVGPKADEPSPPAEEKDEGGGKEAAADAAPGPS). K221 is covalently cross-linked (Glycyl lysine isopeptide (Lys-Gly) (interchain with G-Cter in SUMO2)). Residues S600 and S607 each carry the phosphoserine modification. A disordered region spans residues 603–658 (LLVDSPGMGDGEDEQQEEGTSKQGTKAGLQEKSKEGDTEETPEDSLTAGGDTGGRE). Residue K624 forms a Glycyl lysine isopeptide (Lys-Gly) (interchain with G-Cter in SUMO2) linkage. S647 is subject to Phosphoserine.

Belongs to the TFIIIC subunit 4 family. As to quaternary structure, part of the TFIIIC subcomplex TFIIIC2, consisting of six subunits, GTF3C1, GTF3C2, GTF3C3, GTF3C4, GTF3C5 and GTF3C6. Interacts with BRF1, GTF3C1, GTF3C2, GTF3C5, GTF3C6, POLR3C and POLR3F.

The protein localises to the nucleus. The enzyme catalyses L-lysyl-[protein] + acetyl-CoA = N(6)-acetyl-L-lysyl-[protein] + CoA + H(+). Essential for RNA polymerase III to make a number of small nuclear and cytoplasmic RNAs, including 5S RNA, tRNA, and adenovirus-associated (VA) RNA of both cellular and viral origin. Has histone acetyltransferase activity (HAT) with unique specificity for free and nucleosomal H3. May cooperate with GTF3C5 in facilitating the recruitment of TFIIIB and RNA polymerase through direct interactions with BRF1, POLR3C and POLR3F. May be localized close to the A box. The polypeptide is General transcription factor 3C polypeptide 4 (Gtf3c4) (Mus musculus (Mouse)).